We begin with the raw amino-acid sequence, 99 residues long: uncharacterized protein (99 aa).

This is an uncharacterized protein from Caenorhabditis elegans.